Here is a 378-residue protein sequence, read N- to C-terminus: MAHKKVIVLVAGGTGGHLFPAEAVAVELRQRGYDVHLVTDRRAKCFVSCVDEEHTHIVSSATFTRRHPFALIKTCWILLKGMGQSLALFYKLRPVLVGGFGGYPTFPPLLVAALMRCVTFIHEQNAIMGRANRVLAVFVHAIAGGLLSQTGTHAHKTLLIGNPMREVVLKAAKIPYRPSLGEKPFHFLVFGGSQGASFFSRIVPEAIALLNNKIRRRLRIIQQVRGEVVELMKTYRSMGVQAEVAPFFNDMAERMAHAHFILSRAGASSVCEIAVIGRPALLIPYPYALDHDQAANAALLARVGGAQIVSEKDLTAQRLASLLTQACCAPHLLEKQALAAKKVGQPYATRRLADMAEALIAGRSLSDVREEFFDENAV.

Residues Thr14 to Gly16, Asn125, Arg165, Ser193, and Gln293 each bind UDP-N-acetyl-alpha-D-glucosamine.

The protein belongs to the glycosyltransferase 28 family. MurG subfamily.

The protein resides in the cell inner membrane. The enzyme catalyses di-trans,octa-cis-undecaprenyl diphospho-N-acetyl-alpha-D-muramoyl-L-alanyl-D-glutamyl-meso-2,6-diaminopimeloyl-D-alanyl-D-alanine + UDP-N-acetyl-alpha-D-glucosamine = di-trans,octa-cis-undecaprenyl diphospho-[N-acetyl-alpha-D-glucosaminyl-(1-&gt;4)]-N-acetyl-alpha-D-muramoyl-L-alanyl-D-glutamyl-meso-2,6-diaminopimeloyl-D-alanyl-D-alanine + UDP + H(+). Its pathway is cell wall biogenesis; peptidoglycan biosynthesis. Its function is as follows. Cell wall formation. Catalyzes the transfer of a GlcNAc subunit on undecaprenyl-pyrophosphoryl-MurNAc-pentapeptide (lipid intermediate I) to form undecaprenyl-pyrophosphoryl-MurNAc-(pentapeptide)GlcNAc (lipid intermediate II). This chain is UDP-N-acetylglucosamine--N-acetylmuramyl-(pentapeptide) pyrophosphoryl-undecaprenol N-acetylglucosamine transferase, found in Bartonella quintana (strain Toulouse) (Rochalimaea quintana).